A 142-amino-acid chain; its full sequence is Hemoglobin subunit alpha-1/2 (142 aa).

The Globin domain maps to 2–142 (VLSADDKTNI…VSTVLTSKYR (141 aa)). A Phosphoserine modification is found at Ser4. Residue Lys8 is modified to N6-succinyllysine. Phosphothreonine is present on Thr9. Lys12 carries the post-translational modification N6-succinyllysine. N6-acetyllysine; alternate is present on Lys17. An N6-succinyllysine; alternate modification is found at Lys17. Residue Tyr25 is modified to Phosphotyrosine. Lys41 bears the N6-succinyllysine mark. Position 50 is a phosphoserine (Ser50). Residue His59 participates in O2 binding. Heme b is bound at residue His88. A Phosphoserine modification is found at Ser103. Thr109 is modified (phosphothreonine). A phosphoserine mark is found at Ser125 and Ser132. Phosphothreonine is present on residues Thr135 and Thr138. Ser139 is subject to Phosphoserine.

Belongs to the globin family. Heterotetramer of two alpha chains and two beta chains. As to expression, red blood cells.

Its function is as follows. Involved in oxygen transport from the lung to the various peripheral tissues. Hemopressin acts as an antagonist peptide of the cannabinoid receptor CNR1. Hemopressin-binding efficiently blocks cannabinoid receptor CNR1 and subsequent signaling. The protein is Hemoglobin subunit alpha-1/2 (Hba1) of Rattus norvegicus (Rat).